The primary structure comprises 917 residues: MLQSLKNVFFSDTTTTTTPTTPTTPTTPTTTPTTTTTPTTTPTTTTTSTTPISNLSIKRDIGNINDYKNANYFNYYRILENKYNYLRYNTGLKNISNNETFKLIDFTIDSEMNNTCITSNWNQKYSNNSSTPVEGVYKIPLAPYSVVSGFTVEYQDKVFIGKIKSKEKAQNQYSDSIASGGQAFLAEKTQDGQFSFRIGNLPPNENVTIHLTIISEVCPHLSSLQNCFHRFLFPNYSFNFQFNLNIKLTLPIKTIELLYYPNKDIKFKENSNNKEATLTFSSNNGIDDDIVCIVEPENDIERPQSIIEHSKLNNTYAVSVNFTPSFSHLTSDDVNQKSEFIFLIDCSGSMSGEPIKKAKRALEIIIRSLNENCKFNIYCFGSRFTKAFDNSKMYNDETLKEISGYVEKIDADLGGTELLPPIRDILSTESDFEYPRQLFILTDGEVSERDSLINYVATESNNTRIFTYGIGNSVDTELVIGLSKACKGYYEMIKDNSNFEEQVMKLVSIAFEPTLSNIKVDWGTELQIEQGPTKIRPLYSGETLIVYALLKDNKIPQSTVQVSLIGDGPTGSKLEFPITLDFSKTIDYENNSVHTLAAFNIIKDLEEVERKGNHSNNRDRIEELGKNYGLISKYTSYIVTAASEQVTEETMKTLNIIQIPTTTTTSHTNFETEEDSDDLFSSENRNQTLANISNDMEKIKDIFDDISRLISEQSCMLNEIGDANIEASTLGINSIPQKSNIFSKITSFFSSPSEVSTSKSNFDSDIGSEERRNNNNNNNNNNININNNNNNNNNNNNNNNNNNNNNNNNNNNNNNNNNSDNSDSLLKLIRLQKANGSWSSPFSEFKIDLSKKPSNIDNDDIWITLIVINKILNDYPTQQSQYDLVIQKASKWVKQQLTRLNIPNQYGSLLATSKLYI.

Positions 12-51 (DTTTTTTPTTPTTPTTPTTTPTTTTTPTTTPTTTTTSTTP) are disordered. The span at 13–51 (TTTTTTPTTPTTPTTPTTTPTTTTTPTTTPTTTTTSTTP) shows a compositional bias: low complexity. The 129-residue stretch at 87–215 (RYNTGLKNIS…NVTIHLTIIS (129 aa)) folds into the VIT domain. In terms of domain architecture, VWFA spans 339-507 (EFIFLIDCSG…NFEEQVMKLV (169 aa)). The region spanning 679-741 (LFSSENRNQT…INSIPQKSNI (63 aa)) is the t-SNARE coiled-coil homology domain. Low complexity-rich tracts occupy residues 751-760 (SPSEVSTSKS) and 774-818 (NNNN…NNNN). The disordered stretch occupies residues 751 to 822 (SPSEVSTSKS…NNNNNNSDNS (72 aa)).

This chain is von Willebrand factor A domain-containing protein DDB_G0285975, found in Dictyostelium discoideum (Social amoeba).